The sequence spans 303 residues: Probable 5-dehydro-4-deoxyglucarate dehydratase (303 aa).

This sequence belongs to the DapA family.

It carries out the reaction 5-dehydro-4-deoxy-D-glucarate + H(+) = 2,5-dioxopentanoate + CO2 + H2O. The protein operates within carbohydrate acid metabolism; D-glucarate degradation; 2,5-dioxopentanoate from D-glucarate: step 2/2. This is Probable 5-dehydro-4-deoxyglucarate dehydratase from Ectopseudomonas mendocina (strain ymp) (Pseudomonas mendocina).